Here is a 411-residue protein sequence, read N- to C-terminus: Floricaula/leafy-like protein (411 aa).

A disordered region spans residues 220 to 259 (PDTNYGSEQTKACKKQKRRRSKDSGEDGEERQREHPFIVT). The segment covering 231-240 (ACKKQKRRRS) has biased composition (basic residues). Residues 241 to 255 (KDSGEDGEERQREHP) show a composition bias toward basic and acidic residues. 3 DNA-binding regions span residues 252–256 (REHPF), 321–328 (NKPKMRHY), and 392–395 (YVPT).

Belongs to the FLO/LFY family. In terms of tissue distribution, expressed in vegetative buds and male cones but not in female cones, vascular tissue, roots or secondary needles.

It is found in the nucleus. Probable transcription factor. The protein is Floricaula/leafy-like protein (FLL) of Pinus radiata (Monterey pine).